The chain runs to 500 residues: SAAATSAVPAPNQQPEVFCNQIFINNEWHDAVSKKTFPTVNPSTGEVICQVAEGSKEDVDKAVKAARAAFQLGSPWRRMDASDRGRLLNRLADLIERDRTYLAALETLDNGKPYVISYLVDLDMVLKCLRYYAGWADKYHGKTIPIDGDFFSYTRHEPVGVCGQIIPWNFPLLMQAWKLGPALATGNVVVMKVAEQTPLTALYVANLIKEAGFPPGVVNIVPGFGPTAGAAIASHEDVDKVAFTGSTEVGHLIQVAAGSSNLKRVTLELGGKSPNIIMSDADMDWAVEQAHFALFFNQGQCCCAGSRTFVQEDVYDEFVERSVARAKSRVVGNPFDSRTEQGPQVDETQFKKILGYIKSGQQEGAKLLCGGGAAADRGYFIQPTVFGDVKDGMTIAKEEIFGPVMQILKFKTIEEVVGRANNSKYGLAAAVFTKDLDKANYLSQALQAGTVWINCYDVFGAQSPFGGYKMSGSGRELGEYGLQAYTEVKTVTIKVPQKNS.

N6-acetyllysine is present on residues Lys-35, Lys-56, Lys-61, and Lys-142. NAD(+) is bound at residue Gly-245–Gly-250. Glu-268 functions as the Proton acceptor in the catalytic mechanism. The active-site Nucleophile is Cys-302. N6-acetyllysine is present on residues Lys-351, Lys-358, Lys-366, Lys-390, Lys-409, Lys-411, Lys-424, and Lys-434.

It belongs to the aldehyde dehydrogenase family. As to quaternary structure, homotetramer. Post-translationally, in response to mitochondrial stress, the precursor protein is ubiquitinated by the SIFI complex in the cytoplasm before mitochondrial import, leading to its degradation. Within the SIFI complex, UBR4 initiates ubiquitin chain that are further elongated or branched by KCMF1.

It is found in the mitochondrion matrix. It carries out the reaction an aldehyde + NAD(+) + H2O = a carboxylate + NADH + 2 H(+). It participates in alcohol metabolism; ethanol degradation; acetate from ethanol: step 2/2. Functionally, required for clearance of cellular formaldehyde, a cytotoxic and carcinogenic metabolite that induces DNA damage. This chain is Aldehyde dehydrogenase, mitochondrial (ALDH2), found in Mesocricetus auratus (Golden hamster).